A 141-amino-acid polypeptide reads, in one-letter code: Ribonuclease VapC2 (141 aa).

Residues 7-129 form the PINc domain; it reads LIDKSALVRL…FDAIAALTGQ (123 aa). Mg(2+)-binding residues include Asp99, Asp117, and Asp119.

This sequence belongs to the PINc/VapC protein family. In terms of assembly, probably active as a homodimer. Mg(2+) serves as cofactor.

Functionally, toxic component of a type II toxin-antitoxin (TA) system. Acts as an RNase. All its toxic effects are neutralized by coexpression with cognate antitoxin VapB2. The polypeptide is Ribonuclease VapC2 (Mycobacterium tuberculosis (strain CDC 1551 / Oshkosh)).